The chain runs to 1484 residues: DNA-directed RNA polymerase subunit beta' (1484 aa).

Residues cysteine 67, cysteine 69, cysteine 82, and cysteine 85 each contribute to the Zn(2+) site. 3 residues coordinate Mg(2+): aspartate 499, aspartate 501, and aspartate 503. Cysteine 867, cysteine 943, cysteine 950, and cysteine 953 together coordinate Zn(2+).

The protein belongs to the RNA polymerase beta' chain family. In terms of assembly, the RNAP catalytic core consists of 2 alpha, 1 beta, 1 beta' and 1 omega subunit. When a sigma factor is associated with the core the holoenzyme is formed, which can initiate transcription. Mg(2+) is required as a cofactor. The cofactor is Zn(2+).

It catalyses the reaction RNA(n) + a ribonucleoside 5'-triphosphate = RNA(n+1) + diphosphate. DNA-dependent RNA polymerase catalyzes the transcription of DNA into RNA using the four ribonucleoside triphosphates as substrates. The protein is DNA-directed RNA polymerase subunit beta' of Chlorobium phaeovibrioides (strain DSM 265 / 1930) (Prosthecochloris vibrioformis (strain DSM 265)).